The chain runs to 213 residues: Probable transaldolase (213 aa).

K83 (schiff-base intermediate with substrate) is an active-site residue.

This sequence belongs to the transaldolase family. Type 3B subfamily.

It is found in the cytoplasm. The catalysed reaction is D-sedoheptulose 7-phosphate + D-glyceraldehyde 3-phosphate = D-erythrose 4-phosphate + beta-D-fructose 6-phosphate. The protein operates within carbohydrate degradation; pentose phosphate pathway; D-glyceraldehyde 3-phosphate and beta-D-fructose 6-phosphate from D-ribose 5-phosphate and D-xylulose 5-phosphate (non-oxidative stage): step 2/3. In terms of biological role, transaldolase is important for the balance of metabolites in the pentose-phosphate pathway. The sequence is that of Probable transaldolase from Oceanobacillus iheyensis (strain DSM 14371 / CIP 107618 / JCM 11309 / KCTC 3954 / HTE831).